The primary structure comprises 510 residues: MIWHVQNENFILDSTRIFMKAFHLLLFDGSFIFPECILIFGLILLLMIDSTSDQKDIPWLYFISSTSLVMSITALLFRWREEPMISFSGNFQTNNFNEIFQFLILLCSTLCIPLSVEYIECTEMAITEFLLFVLTATLGGMFLCGANDLITIFVAPECFSLCSYLLSGYTKKDVRSNEATTKYLLMGGASSSILVHGFSWLYGSSGGEIELQEIVNGLINTQMYNSPGISIALIFITVGIGFKLSPAPSHQWTPDVYEGSPTPVVAFLSVTSKVAASASATRIFDIPFYFSSNEWHLLLEILAILSMILGNLIAITQTSMKRMLAYSSIGQIGYVIIGIIVGDSNGGYASMITYMLFYISMNLGTFACIVSFGLRTGTDNIRDYAGLYTKDAFLALSLALCLLSLGGLPPLAGFFGKLHLFWCGWQAGLYFLVSIGLLTSVVSIYYYLKIIKLLMTGRNQEITPHVQNYRRSPLRSNNSIELSMIVCVIASTIPGISMNPIIEIAQDTLF.

Transmembrane regions (helical) follow at residues 24–44 (LLLF…GLIL), 57–77 (IPWL…ALLF), 99–119 (IFQF…VEYI), 124–144 (MAIT…MFLC), 149–169 (LITI…LSGY), 183–203 (YLLM…WLYG), 227–247 (PGIS…LSPA), 295–315 (WHLL…LIAI), 323–343 (MLAY…IVGD), 354–374 (YMLF…SFGL), 392–412 (AFLA…PPLA), 418–438 (LHLF…IGLL), and 482–502 (LSMI…NPII).

This sequence belongs to the complex I subunit 2 family. In terms of assembly, NDH is composed of at least 16 different subunits, 5 of which are encoded in the nucleus.

It is found in the plastid. The protein resides in the chloroplast thylakoid membrane. The enzyme catalyses a plastoquinone + NADH + (n+1) H(+)(in) = a plastoquinol + NAD(+) + n H(+)(out). It catalyses the reaction a plastoquinone + NADPH + (n+1) H(+)(in) = a plastoquinol + NADP(+) + n H(+)(out). Functionally, NDH shuttles electrons from NAD(P)H:plastoquinone, via FMN and iron-sulfur (Fe-S) centers, to quinones in the photosynthetic chain and possibly in a chloroplast respiratory chain. The immediate electron acceptor for the enzyme in this species is believed to be plastoquinone. Couples the redox reaction to proton translocation, and thus conserves the redox energy in a proton gradient. The chain is NAD(P)H-quinone oxidoreductase subunit 2 B, chloroplastic from Morus indica (Mulberry).